Here is a 343-residue protein sequence, read N- to C-terminus: Olfactory receptor 1E3 (343 aa).

The Extracellular portion of the chain corresponds to 1-28 (MMKKNQTMISEFLLLGLPIQPEQQNLFY). A glycan (N-linked (GlcNAc...) asparagine) is linked at Asn5. The chain crosses the membrane as a helical span at residues 29–49 (ALFLAVYLTTLLGNLLVIVLI). Residues 50 to 107 (RLDSHLHMPMYLCLSNLSFSDLCFSSVTMPKLLQNMQSQNPSIPFADCLAQMYFHLFY) lie on the Cytoplasmic side of the membrane. Cys97 and Cys179 form a disulfide bridge. Residues 108 to 128 (GVLESFLLVVMAYHCYVAICF) traverse the membrane as a helical segment. Residues 129 to 141 (PLHYTTIMSPKCC) are Extracellular-facing. A helical transmembrane segment spans residues 142 to 162 (LGLLTLSWLLTTAHATLHTLL). The Cytoplasmic segment spans residues 163 to 195 (MARLSFCAENVIPHFFCDTSTLLKLACSNTQVN). The chain crosses the membrane as a helical span at residues 196-216 (GWVMFFMGGLILVIPFLLLIM). At 217–242 (SCARIVSTILRVPSTGGIQKAFSTCG) the chain is on the extracellular side. A helical transmembrane segment spans residues 243–263 (PHLSVVSLFYGTIIGLYLCPL). The Cytoplasmic portion of the chain corresponds to 264 to 271 (TNHNTVKD). Residues 272-292 (TVMAVMYTGVTHMLNPFIYSL) form a helical membrane-spanning segment. Topologically, residues 293–310 (RNRDMRGNPGQSLQHKEN) are extracellular. Residues 311–331 (FFVFKIVIVGILPLLNLVGVV) traverse the membrane as a helical segment. Topologically, residues 332 to 343 (KLIMKYHSKSVA) are cytoplasmic.

Belongs to the G-protein coupled receptor 1 family.

It is found in the cell membrane. Its function is as follows. Odorant receptor. The sequence is that of Olfactory receptor 1E3 (OR1E3) from Homo sapiens (Human).